We begin with the raw amino-acid sequence, 537 residues long: Cytochrome P450 monooxygenase yanC (537 aa).

Positions 1 to 21 (MALVHLTALAACGLLLVILRA) are cleaved as a signal peptide. Cysteine 449 contacts heme.

This sequence belongs to the cytochrome P450 family. It depends on heme as a cofactor.

The protein operates within secondary metabolite biosynthesis; terpenoid biosynthesis. Cytochrome P450 monooxygenase; part of the gene cluster that mediates the biosynthesis of yanuthone D, a fungal isoprenoid epoxycyclohexenone that acts as an antibiotic against fungi and bacteria. The first step of the pathway is the synthesis of 6-methylsalicylic acid (6-MSA) by the polyketide synthase yanA. 6-MSA is then converted to m-cresol by the decarboxylase yanB. The cytochrome P450 monooxygenase yanC then catalyzes the oxidation of m-cresol to toluquinol. Epoxidation of toluquinol is then performed by the short chain dehydrogenase yanD, with the help of yanE, and a further prenylation by yanG leads to 7-deacetoxyyanuthone A. The next step is the hydroxylation of C-22 of 7-deacetoxyyanuthone A by the cytochrome P450 monooxygenase yanH to yield 22-deacetylyanuthone A. O-Mevalon transferase yanI then attaches mevalon to the hydroxyl group of 22-deacetylyanuthone A to produce yanuthone E. Finally, the FAD-dependent monooxygenase yanF oxidizes the hydroxyl group at C15 of yanuthone E to form yanuthone D. Furthermore, several branching points in the pathway lead to the production of yanuthones F and G from 7-deacetoxyyanuthone A; yanuthones H and I from 22-deacetylyanuthone A; and yanuthone J from yanuthone E. YanC is also involved in the synthesis of yanuthone X1 which does not have 6-methylsalicylic acid (6-MSA) as precursor. In Aspergillus niger (strain ATCC 1015 / CBS 113.46 / FGSC A1144 / LSHB Ac4 / NCTC 3858a / NRRL 328 / USDA 3528.7), this protein is Cytochrome P450 monooxygenase yanC.